The chain runs to 239 residues: Myogenic factor 6 (239 aa).

The segment at 28–64 (HLDMSGVSPLYNGNDSPLSPGQDNVPSETGGESSGDE) is disordered. Over residues 38–58 (YNGNDSPLSPGQDNVPSETGG) the composition is skewed to polar residues. The bHLH domain occupies 96–147 (DRRKAATLRERRRLKKINEAFDALKRKTVANPNQRLPKVEILRSAISYIERL). Residues 155 to 189 (DEQERSQSGASDTRNDKEQNRPSGGDYRWKKASNT) form a disordered region.

In terms of assembly, efficient DNA binding requires dimerization with another bHLH protein.

The protein localises to the nucleus. Involved in muscle differentiation (myogenic factor). Induces fibroblasts to differentiate into myoblasts. Probable sequence specific DNA-binding protein. The sequence is that of Myogenic factor 6 (myf6) from Takifugu rubripes (Japanese pufferfish).